Here is a 149-residue protein sequence, read N- to C-terminus: Sec-independent protein translocase protein TatB (149 aa).

The chain crosses the membrane as a helical span at residues 1-22; it reads MFDGIGFMELLLIGVLGLIVLG. Residues 86–113 show a composition bias toward polar residues; that stretch reads LKQAAQSVNRPYQVQDTPSAQDNQIHNP. The disordered stretch occupies residues 86–149; the sequence is LKQAAQSVNR…DPRSNTKANG (64 aa). The span at 114–135 shows a compositional bias: low complexity; the sequence is ASQTVSTEASSTSASSAPKSES.

Belongs to the TatB family. In terms of assembly, the Tat system comprises two distinct complexes: a TatABC complex, containing multiple copies of TatA, TatB and TatC subunits, and a separate TatA complex, containing only TatA subunits. Substrates initially bind to the TatABC complex, which probably triggers association of the separate TatA complex to form the active translocon.

The protein resides in the cell inner membrane. In terms of biological role, part of the twin-arginine translocation (Tat) system that transports large folded proteins containing a characteristic twin-arginine motif in their signal peptide across membranes. Together with TatC, TatB is part of a receptor directly interacting with Tat signal peptides. TatB may form an oligomeric binding site that transiently accommodates folded Tat precursor proteins before their translocation. The chain is Sec-independent protein translocase protein TatB from Shewanella oneidensis (strain ATCC 700550 / JCM 31522 / CIP 106686 / LMG 19005 / NCIMB 14063 / MR-1).